The primary structure comprises 660 residues: Epithelial sodium channel subunit gamma (660 aa).

Topologically, residues Met1–Trp55 are cytoplasmic. Residues Ile56–Leu76 form a helical membrane-spanning segment. Residues Met77–Gln537 are Extracellular-facing. Cystine bridges form between Cys101–Cys286, Cys209–Cys217, Cys263–Cys270, Cys375–Cys460, Cys397–Cys456, Cys401–Cys452, Cys410–Cys437, and Cys412–Cys426. The chain crosses the membrane as a helical span at residues Leu538–Ile558. The Cytoplasmic segment spans residues Asp559–Leu660.

It belongs to the amiloride-sensitive sodium channel (TC 1.A.6) family. SCNN1G subfamily. In terms of assembly, component of the heterotrimeric epithelial sodium channel (ENaC) composed of an alpha/SCNN1A, a beta/SCNN1B and a gamma/SCNN1G subunit.

The protein resides in the apical cell membrane. The enzyme catalyses Na(+)(in) = Na(+)(out). Originally identified and characterized by its inhibition by the diuretic drug amiloride. Functionally, this is one of the three pore-forming subunits of the heterotrimeric epithelial sodium channel (ENaC), a critical regulator of sodium balance and fluid homeostasis. ENaC operates in epithelial tissues, where it mediates the electrodiffusion of sodium ions from extracellular fluid through the apical membrane of cells, with water following osmotically. This Xenopus laevis (African clawed frog) protein is Epithelial sodium channel subunit gamma (scnn1g-a).